The sequence spans 155 residues: MAPKTKEEKPASEAVEPKAEAKPKAEKAPKKKEKKAPAKKSAKEPAAGDAAEGDKKKKKAKVAKSETYKLYIYKVLKQVHPDTGISSKAMSIMNSFINDIFEKVATEASKLSRYNKKPTVTSREIQTAVRLVLPGELAKHAVSEGTKAVTKFTSA.

A compositionally biased stretch (basic and acidic residues) spans 1–28 (MAPKTKEEKPASEAVEPKAEAKPKAEKA). The segment at 1–62 (MAPKTKEEKP…GDKKKKKAKV (62 aa)) is disordered. Positions 29-40 (PKKKEKKAPAKK) are enriched in basic residues. Residue K151 forms a Glycyl lysine isopeptide (Lys-Gly) (interchain with G-Cter in ubiquitin) linkage.

It belongs to the histone H2B family. In terms of assembly, the nucleosome is a histone octamer containing two molecules each of H2A, H2B, H3 and H4 assembled in one H3-H4 heterotetramer and two H2A-H2B heterodimers. The octamer wraps approximately 147 bp of DNA. In terms of processing, monoubiquitinated to form H2BK143ub1; may give a specific tag for epigenetic transcriptional activation.

It is found in the nucleus. The protein localises to the chromosome. In terms of biological role, core component of nucleosome. Nucleosomes wrap and compact DNA into chromatin, limiting DNA accessibility to the cellular machineries which require DNA as a template. Histones thereby play a central role in transcription regulation, DNA repair, DNA replication and chromosomal stability. DNA accessibility is regulated via a complex set of post-translational modifications of histones, also called histone code, and nucleosome remodeling. This is Histone H2B.4 from Volvox carteri (Green alga).